We begin with the raw amino-acid sequence, 128 residues long: Ribonuclease P protein component (128 aa).

The protein belongs to the RnpA family. As to quaternary structure, consists of a catalytic RNA component (M1 or rnpB) and a protein subunit.

The enzyme catalyses Endonucleolytic cleavage of RNA, removing 5'-extranucleotides from tRNA precursor.. Functionally, RNaseP catalyzes the removal of the 5'-leader sequence from pre-tRNA to produce the mature 5'-terminus. It can also cleave other RNA substrates such as 4.5S RNA. The protein component plays an auxiliary but essential role in vivo by binding to the 5'-leader sequence and broadening the substrate specificity of the ribozyme. The polypeptide is Ribonuclease P protein component (Prochlorococcus marinus (strain MIT 9312)).